The chain runs to 862 residues: Cell surface glycoprotein (862 aa).

A signal peptide spans 1 to 34; the sequence is MTDTQQKIKAVLLTVLMVTSVFAATIAFSGAAAA. Disordered stretches follow at residues 35 to 60, 101 to 126, and 200 to 220; these read SERG…SAGN, ILLE…EGTE, and VNTN…DRDD. Positions 43–57 are enriched in polar residues; sequence YTTGPTDGNQDNVDS. Positions 206 to 220 are enriched in basic and acidic residues; it reads NDDHPNPAADGDRDD. Residues N442, N520, N550, N702, and N761 are each glycosylated (N-linked (GlcNAc...) asparagine). Residues 752 to 838 form a disordered region; that stretch reads LSDENVEPGN…TEEATTEATG (87 aa). Residues 784–801 show a composition bias toward acidic residues; the sequence is SLEEEQPATDTPEPDTDT. The segment covering 802-815 has biased composition (low complexity); sequence PEPATDTPEPATDT. Residues 816 to 833 are compositionally biased toward acidic residues; the sequence is PEPDTDTPEPDTETEEAT. Residues 838–858 traverse the membrane as a helical segment; the sequence is GPGFTAAIALIALVAAALLAV. A PGF sorting signal motif is present at residues 839–841; sequence PGF.

The protein belongs to the halobacterial S-layer protein family. In terms of processing, glycosylated. Post-translationally, cleaved by the archaeosortase ArtA at the C-terminus, with removal of a short hydrophobic segment. Lipidation.

The protein localises to the secreted. Its subcellular location is the cell wall. The protein resides in the S-layer. It localises to the cell membrane. S-layer protein. The S-layer is a paracrystalline mono-layered assembly of proteins which coat the surface of the cell. The chain is Cell surface glycoprotein from Haloarcula japonica (strain ATCC 49778 / DSM 6131 / JCM 7785 / NBRC 101032 / NCIMB 13157 / TR-1).